An 85-amino-acid polypeptide reads, in one-letter code: Conotoxin Lt28.7 (85 aa).

A signal peptide spans 1–21; sequence MPKLEMMLLVLLILPLCYIDA. Positions 22–40 are excised as a propeptide; sequence VGPPPPWNMEDEIIEHWQE.

Belongs to the conotoxin D superfamily. Post-translationally, contains 5 disulfide bonds. Expressed by the venom duct.

It localises to the secreted. In terms of biological role, probable neurotoxin. This chain is Conotoxin Lt28.7, found in Conus litteratus (Lettered cone).